The primary structure comprises 274 residues: Diaminopimelate epimerase (274 aa).

3 residues coordinate substrate: asparagine 11, glutamine 44, and asparagine 64. Cysteine 73 serves as the catalytic Proton donor. Substrate contacts are provided by residues 74–75, asparagine 157, asparagine 190, and 208–209; these read GN and ER. Cysteine 217 serves as the catalytic Proton acceptor. Residue 218 to 219 participates in substrate binding; the sequence is GS.

This sequence belongs to the diaminopimelate epimerase family. Homodimer.

The protein resides in the cytoplasm. The catalysed reaction is (2S,6S)-2,6-diaminopimelate = meso-2,6-diaminopimelate. It participates in amino-acid biosynthesis; L-lysine biosynthesis via DAP pathway; DL-2,6-diaminopimelate from LL-2,6-diaminopimelate: step 1/1. Its function is as follows. Catalyzes the stereoinversion of LL-2,6-diaminopimelate (L,L-DAP) to meso-diaminopimelate (meso-DAP), a precursor of L-lysine and an essential component of the bacterial peptidoglycan. This chain is Diaminopimelate epimerase, found in Escherichia fergusonii (strain ATCC 35469 / DSM 13698 / CCUG 18766 / IAM 14443 / JCM 21226 / LMG 7866 / NBRC 102419 / NCTC 12128 / CDC 0568-73).